The primary structure comprises 291 residues: Protease HtpX homolog (291 aa).

The next 2 helical transmembrane spans lie at 4–24 and 38–58; these read VFLF…SARL and MGML…ISLL. Residue His144 coordinates Zn(2+). Glu145 is an active-site residue. His148 provides a ligand contact to Zn(2+). The next 2 helical transmembrane spans lie at 159 to 179 and 199 to 219; these read LIQG…AYAL and ISSI…VMYF. A Zn(2+)-binding site is contributed by Glu224.

Belongs to the peptidase M48B family. The cofactor is Zn(2+).

It is found in the cell inner membrane. The polypeptide is Protease HtpX homolog (Chlorobium phaeovibrioides (strain DSM 265 / 1930) (Prosthecochloris vibrioformis (strain DSM 265))).